Here is a 208-residue protein sequence, read N- to C-terminus: Cysteine-rich protein 2 (208 aa).

Positions Cys-5–Cys-57 constitute an LIM zinc-binding 1 domain. Lys-23 carries the post-translational modification N6-acetyllysine. The segment at Ala-98–Phe-119 is disordered. Ser-104 carries the post-translational modification Phosphoserine. Residues Cys-126–Cys-178 form the LIM zinc-binding 2 domain. Lys-138 and Lys-144 each carry N6-acetyllysine.

As to quaternary structure, interacts with TGFB1I1.

The protein is Cysteine-rich protein 2 (CRIP2) of Pongo abelii (Sumatran orangutan).